The primary structure comprises 790 residues: N-methylputrescine oxidase 1, peroxisomal (790 aa).

The disordered stretch occupies residues 1 to 23; sequence MATTKQKVTAPSPSPSSSTASCC. A compositionally biased stretch (low complexity) spans 9-23; sequence TAPSPSPSSSTASCC. 423–434 contacts substrate; it reads AFDAGEDGLGKN. Catalysis depends on aspartate 425, which acts as the Proton acceptor. Cysteine 444 and cysteine 470 are joined by a disulfide. A substrate-binding site is contributed by 506-511; that stretch reads VANYEY. Tyrosine 509 acts as the Schiff-base intermediate with substrate; via topaquinone in catalysis. Tyrosine 509 is subject to 2',4',5'-topaquinone. Positions 559 and 561 each coordinate Cu cation. Mn(2+)-binding residues include aspartate 714 and isoleucine 715. Residue histidine 725 coordinates Cu cation.

It belongs to the copper/topaquinone oxidase family. As to quaternary structure, homodimer. Cu cation is required as a cofactor. Zn(2+) serves as cofactor. It depends on L-topaquinone as a cofactor. In terms of processing, topaquinone (TPQ) is generated by copper-dependent autoxidation of a specific tyrosyl residue. In terms of tissue distribution, mainly expressed in roots, and, to a lower extent, in stems.

It localises to the peroxisome. The catalysed reaction is a primary methyl amine + O2 + H2O = an aldehyde + H2O2 + NH4(+). The enzyme catalyses N-methylputrescine + O2 + H2O = 4-methylaminobutanal + H2O2 + NH4(+). The protein operates within alkaloid biosynthesis; nicotine biosynthesis. Its function is as follows. Involved in the biosynthesis of pyridine alkaloid natural products, leading mainly to the production of anabasine, anatabine, nicotine and nornicotine, effective deterrents against herbivores with antiparasitic and pesticide properties (neurotoxins); nornicotine serves as the precursor in the synthesis of the carcinogen compound N'-nitrosonornicotine (NNN). Amine oxidase which mediates the deamination of N-methylputrescine to produce 4-methylaminobutanal. Oxidizes preferentially N-methylated amines. The chain is N-methylputrescine oxidase 1, peroxisomal from Nicotiana tabacum (Common tobacco).